We begin with the raw amino-acid sequence, 353 residues long: D-alanine--D-alanine ligase (353 aa).

An ATP-grasp domain is found at 135-344 (KMVFAQAGLA…FPQLVDRLVQ (210 aa)). Residue 171–226 (EAQLDYPMFVKPANLGSSVGISKVRTRDELEKALDLAAEYDRRLIVEAGVTAREVE) coordinates ATP. Mg(2+)-binding residues include D297, E311, and N313.

It belongs to the D-alanine--D-alanine ligase family. It depends on Mg(2+) as a cofactor. Mn(2+) is required as a cofactor.

The protein resides in the cytoplasm. It catalyses the reaction 2 D-alanine + ATP = D-alanyl-D-alanine + ADP + phosphate + H(+). It functions in the pathway cell wall biogenesis; peptidoglycan biosynthesis. In terms of biological role, cell wall formation. The protein is D-alanine--D-alanine ligase of Picosynechococcus sp. (strain ATCC 27264 / PCC 7002 / PR-6) (Agmenellum quadruplicatum).